The primary structure comprises 117 residues: Minor capsid protein VP2 (117 aa).

This sequence belongs to the lagovirus VP2 protein family. In terms of assembly, homooligomer. The portal-like structure consists in 12 copies of VP2. Interacts with capsid protein VP1.

Its subcellular location is the virion. The protein localises to the host cytoplasm. In terms of biological role, minor structural protein that forms a portal-like structure at a unique three-fold axis of symmetry, following binding to the host receptor. The channel formed by VP2 may allow the delivery of the viral genome through the host endosomal membrane. The protein is Minor capsid protein VP2 of Oryctolagus cuniculus (Rabbit).